Consider the following 941-residue polypeptide: Isoleucine--tRNA ligase (941 aa).

Residues 59-69 carry the 'HIGH' region motif; the sequence is PYANGNIHIGH. Glutamate 562 is a binding site for L-isoleucyl-5'-AMP. The 'KMSKS' region motif lies at 603-607; it reads KMSKS. Residue lysine 606 coordinates ATP. Zn(2+) is bound by residues cysteine 904, cysteine 907, cysteine 924, and cysteine 927.

It belongs to the class-I aminoacyl-tRNA synthetase family. IleS type 1 subfamily. As to quaternary structure, monomer. Zn(2+) is required as a cofactor.

It localises to the cytoplasm. The catalysed reaction is tRNA(Ile) + L-isoleucine + ATP = L-isoleucyl-tRNA(Ile) + AMP + diphosphate. Catalyzes the attachment of isoleucine to tRNA(Ile). As IleRS can inadvertently accommodate and process structurally similar amino acids such as valine, to avoid such errors it has two additional distinct tRNA(Ile)-dependent editing activities. One activity is designated as 'pretransfer' editing and involves the hydrolysis of activated Val-AMP. The other activity is designated 'posttransfer' editing and involves deacylation of mischarged Val-tRNA(Ile). The chain is Isoleucine--tRNA ligase from Haemophilus influenzae (strain PittEE).